The sequence spans 375 residues: Glucokinase 1 (375 aa).

Position 25 to 30 (25 to 30 (CDVGGS)) interacts with ATP.

This sequence belongs to the bacterial glucokinase family. As to quaternary structure, monomer. In terms of processing, the N-terminus is blocked.

It carries out the reaction D-glucose + ATP = D-glucose 6-phosphate + ADP + H(+). This Trichomonas vaginalis protein is Glucokinase 1 (GK1).